Consider the following 140-residue polypeptide: Histone H2B (140 aa).

Positions 1–10 (MPPKAAEKKP) are enriched in basic and acidic residues. The disordered stretch occupies residues 1–48 (MPPKAAEKKPSTGGKAPAGKAPAEKKEAGKKTAAAASGDKKKRGKTRK). N6-acetyllysine; alternate occurs at positions 8 and 9. Residues lysine 8 and lysine 9 each participate in a glycyl lysine isopeptide (Lys-Gly) (interchain with G-Cter in SUMO); alternate cross-link. A compositionally biased stretch (low complexity) spans 11 to 21 (STGGKAPAGKA). N6-acetyllysine is present on lysine 15. Lysine 25 carries the N6-acetyllysine; alternate modification. Lysine 25 participates in a covalent cross-link: Glycyl lysine isopeptide (Lys-Gly) (interchain with G-Cter in SUMO); alternate. Lysine 26 participates in a covalent cross-link: Glycyl lysine isopeptide (Lys-Gly) (interchain with G-Cter in SUMO). Lysine 134 is covalently cross-linked (Glycyl lysine isopeptide (Lys-Gly) (interchain with G-Cter in ubiquitin)).

This sequence belongs to the histone H2B family. In terms of assembly, the nucleosome is a histone octamer containing two molecules each of H2A, H2B, H3 and H4 assembled in one H3-H4 heterotetramer and two H2A-H2B heterodimers. The octamer wraps approximately 147 bp of DNA. Post-translationally, monoubiquitinated by the ubc2-bre1 complex to form H2BK123ub1. H2BK123ub1 gives a specific tag for epigenetic transcriptional activation and is also prerequisite for H3K4me and H3K79me formation. H2BK123ub1 also modulates the formation of double-strand breaks during meiosis and is a prerequisite for DNA-damage checkpoint activation. Acetylated by gcn5 to form H2BK11ac and H2BK16ac. H2BK16ac can also be formed by esa1. Acetylation of N-terminal lysines and particularly formation of H2BK11acK16ac has a positive effect on transcription. In terms of processing, sumoylation to form H2BK6su or H2BK7su, and probably also H2BK16su or H2BK17su, occurs preferentially near the telomeres and represses gene transcription.

The protein localises to the nucleus. The protein resides in the chromosome. In terms of biological role, core component of nucleosome. Nucleosomes wrap and compact DNA into chromatin, limiting DNA accessibility to the cellular machineries which require DNA as a template. Histones thereby play a central role in transcription regulation, DNA repair, DNA replication and chromosomal stability. DNA accessibility is regulated via a complex set of post-translational modifications of histones, also called histone code, and nucleosome remodeling. The sequence is that of Histone H2B (htb1) from Aspergillus clavatus (strain ATCC 1007 / CBS 513.65 / DSM 816 / NCTC 3887 / NRRL 1 / QM 1276 / 107).